Reading from the N-terminus, the 474-residue chain is Dihydrolipoyl dehydrogenase (474 aa).

FAD-binding positions include 34 to 42 (EKEKLGGTC), Lys-51, and Gly-114. Cysteines 42 and 47 form a disulfide. NAD(+) contacts are provided by residues 188–192 (GGGVI), Glu-211, Val-245, and 278–281 (SIGR). The FAD site is built by Asp-320 and Ala-328. His-453 functions as the Proton acceptor in the catalytic mechanism.

Belongs to the class-I pyridine nucleotide-disulfide oxidoreductase family. Homodimer. The cofactor is FAD.

The protein localises to the cytoplasm. The catalysed reaction is N(6)-[(R)-dihydrolipoyl]-L-lysyl-[protein] + NAD(+) = N(6)-[(R)-lipoyl]-L-lysyl-[protein] + NADH + H(+). Functionally, the branched-chain alpha-keto dehydrogenase complex catalyzes the overall conversion of alpha-keto acids to acyl-CoA and CO(2). It contains multiple copies of 3 enzymatic components: branched-chain alpha-keto acid decarboxylase (E1), lipoamide acyltransferase (E2) and lipoamide dehydrogenase (E3). In Bacillus subtilis (strain 168), this protein is Dihydrolipoyl dehydrogenase (bfmBC).